The primary structure comprises 222 residues: Orotate phosphoribosyltransferase (222 aa).

Residue lysine 29 participates in 5-phospho-alpha-D-ribose 1-diphosphate binding. 37 to 38 (FF) contributes to the orotate binding site. Residues 75 to 76 (YK), arginine 101, lysine 102, lysine 105, histidine 107, and 126 to 134 (DDVISAGTS) contribute to the 5-phospho-alpha-D-ribose 1-diphosphate site. Serine 130 and arginine 158 together coordinate orotate.

Belongs to the purine/pyrimidine phosphoribosyltransferase family. PyrE subfamily. As to quaternary structure, homodimer. It depends on Mg(2+) as a cofactor.

The catalysed reaction is orotidine 5'-phosphate + diphosphate = orotate + 5-phospho-alpha-D-ribose 1-diphosphate. The protein operates within pyrimidine metabolism; UMP biosynthesis via de novo pathway; UMP from orotate: step 1/2. Functionally, catalyzes the transfer of a ribosyl phosphate group from 5-phosphoribose 1-diphosphate to orotate, leading to the formation of orotidine monophosphate (OMP). The polypeptide is Orotate phosphoribosyltransferase (Polynucleobacter necessarius subsp. necessarius (strain STIR1)).